The chain runs to 389 residues: Alanine racemase TOXG (389 aa).

Lys235 carries the post-translational modification N6-(pyridoxal phosphate)lysine.

It belongs to the threonine aldolase family. Pyridoxal 5'-phosphate serves as cofactor.

The enzyme catalyses L-alanine = D-alanine. It participates in mycotoxin biosynthesis; HC-toxin biosynthesis. Alanine racemase, part of the diffuse TOX2 gene cluster that mediates the biosynthesis of the HC-toxin, cyclic tetrapeptide of structure cyclo(D-Pro-L-Ala-D-Ala-L-Aeo), where Aeo stands for 2-amino-9,10-epoxi-8-oxodecanoic acid. HC-toxin is a determinant of specificity and virulence in the interaction between the producing fungus and its host, maize. TOXG catalyzes the conversion of L-alanine into D-alanine, an essential precursor for the production of the major forms of HC-toxin by the non-ribosomal peptide synthetase HTS1. The chain is Alanine racemase TOXG from Cochliobolus carbonum (Maize leaf spot fungus).